Reading from the N-terminus, the 360-residue chain is UDP-N-acetylglucosamine--N-acetylmuramyl-(pentapeptide) pyrophosphoryl-undecaprenol N-acetylglucosamine transferase (360 aa).

Residues Ser198 and Gln289 each coordinate UDP-N-acetyl-alpha-D-glucosamine.

The protein belongs to the glycosyltransferase 28 family. MurG subfamily.

The protein resides in the cell membrane. The enzyme catalyses Mur2Ac(oyl-L-Ala-gamma-D-Glu-L-Lys-D-Ala-D-Ala)-di-trans,octa-cis-undecaprenyl diphosphate + UDP-N-acetyl-alpha-D-glucosamine = beta-D-GlcNAc-(1-&gt;4)-Mur2Ac(oyl-L-Ala-gamma-D-Glu-L-Lys-D-Ala-D-Ala)-di-trans,octa-cis-undecaprenyl diphosphate + UDP + H(+). Its pathway is cell wall biogenesis; peptidoglycan biosynthesis. Functionally, cell wall formation. Catalyzes the transfer of a GlcNAc subunit on undecaprenyl-pyrophosphoryl-MurNAc-pentapeptide (lipid intermediate I) to form undecaprenyl-pyrophosphoryl-MurNAc-(pentapeptide)GlcNAc (lipid intermediate II). The protein is UDP-N-acetylglucosamine--N-acetylmuramyl-(pentapeptide) pyrophosphoryl-undecaprenol N-acetylglucosamine transferase of Streptococcus pyogenes serotype M5 (strain Manfredo).